A 547-amino-acid polypeptide reads, in one-letter code: Mercuric reductase (547 aa).

Residues 4–67 (NSYKIPIQGM…NISAAGYQPG (64 aa)) form the HMA domain. A metal cation contacts are provided by Cys15 and Cys18. Ala97, Gly117, and Thr122 together coordinate FAD. A disulfide bond links Cys123 and Cys128. FAD contacts are provided by Lys132, Ala196, Asp388, and Val396. The Hg(2+) site is built by Cys544 and Cys545.

Belongs to the class-I pyridine nucleotide-disulfide oxidoreductase family. In terms of assembly, homodimer. FAD is required as a cofactor.

It catalyses the reaction Hg + NADP(+) + H(+) = Hg(2+) + NADPH. In terms of biological role, resistance to Hg(2+) in bacteria appears to be governed by a specialized system which includes mercuric reductase. MerA protein is responsible for volatilizing mercury as Hg(0). In Staphylococcus aureus, this protein is Mercuric reductase (merA).